Reading from the N-terminus, the 519-residue chain is Cytosol aminopeptidase (519 aa).

Phosphoserine is present on serine 42. N6-succinyllysine is present on lysine 45. At serine 54 the chain carries Phosphoserine. N6-succinyllysine is present on residues lysine 61 and lysine 103. A phosphoserine mark is found at serine 180 and serine 194. Zn(2+) is bound by residues leucine 202, methionine 203, and threonine 205. At lysine 221 the chain carries N6-acetyllysine; alternate. At lysine 221 the chain carries N6-succinyllysine; alternate. Serine 238 carries the phosphoserine modification. Positions 282 and 287 each coordinate Zn(2+). Positions 282, 287, 292, and 294 each coordinate substrate. Aspartate 287 serves as a coordination point for Mg(2+). Residue lysine 294 is part of the active site. Arginine 303, aspartate 305, aspartate 364, and glutamate 366 together coordinate Zn(2+). Positions 305 and 364 each coordinate substrate. Residues aspartate 364 and glutamate 366 each coordinate Mg(2+). Arginine 368 is an active-site residue. At lysine 455 the chain carries N6-acetyllysine; alternate. Lysine 455 carries the N6-succinyllysine; alternate modification. Lysine 476 carries the N6-succinyllysine modification. N6-acetyllysine; alternate is present on lysine 489. Lysine 489 carries the post-translational modification N6-succinyllysine; alternate.

The protein belongs to the peptidase M17 family. Homohexamer. Requires Zn(2+) as cofactor. The cofactor is Mn(2+).

Its subcellular location is the cytoplasm. The catalysed reaction is Release of an N-terminal amino acid, Xaa-|-Yaa-, in which Xaa is preferably Leu, but may be other amino acids including Pro although not Arg or Lys, and Yaa may be Pro. Amino acid amides and methyl esters are also readily hydrolyzed, but rates on arylamides are exceedingly low.. It catalyses the reaction an S-substituted L-cysteinylglycine + H2O = an S-substituted L-cysteine + glycine. The enzyme catalyses L-cysteinylglycine + H2O = L-cysteine + glycine. It carries out the reaction S-benzyl-L-cysteinylglycine + H2O = S-benzyl-L-cysteine + glycine. The catalysed reaction is Release of N-terminal proline from a peptide.. Functionally, cytosolic metallopeptidase that catalyzes the removal of unsubstituted N-terminal hydrophobic amino acids from various peptides. The presence of Zn(2+) ions is essential for the peptidase activity, and the association with other cofactors can modulate the substrate spectificity of the enzyme. For instance, in the presence of Mn(2+), it displays a specific Cys-Gly hydrolyzing activity of Cys-Gly-S-conjugates. Involved in the metabolism of glutathione and in the degradation of glutathione S-conjugates, which may play a role in the control of the cell redox status. This is Cytosol aminopeptidase from Sus scrofa (Pig).